The primary structure comprises 331 residues: Peroxisomal nicotinamide adenine dinucleotide carrier (331 aa).

Solcar repeat units follow at residues 2 to 91 (SDAL…FRNR), 109 to 216 (VGMF…MLTK), and 229 to 320 (VTAL…LVKG). 6 helical membrane-spanning segments follow: residues 5–25 (LINGLAGAGGGIIAQLLTYPL), 63–85 (LYGGLAPSLAGTAASQGVYYYFY), 116–136 (LVAAFAGSVNVLMTNPIWVIV), 180–200 (VYDEAGITGFWKGVIPTLIMV), 235–255 (FLLGAVAKLGATVTTYPLLVV), and 293–313 (YKGMSTKIVQSVLAAAVLFMI).

This sequence belongs to the mitochondrial carrier (TC 2.A.29) family. As to quaternary structure, homodimer. Expressed in cotyledons, hypocotyls, vascular tissues, trichomes, hydathodes, seeds, pedicels, flowers and stigma.

The protein localises to the glyoxysome membrane. Inhibited by pyridoxal 5'-phosphate, bathophenanthroline, tannic acid, mersalyl, mercuric chloride and bromocresol purple. Functionally, mediates the NAD(+) import into peroxisomes. Favors the NAD(+)(in)/AMP(out) antiport exchange, but is also able to catalyze a low unidirectional transport that might be essential under special conditions. Transports CoA, dephospho-CoA, acetyl-CoA, adenosine 3',5'-diphosphate (PAP), NAD(+), AMP, ADP and NADH, but has no activity with ATP, GTP, GDP, NADPH, NADP(+) or FAD. Required for peroxisomes proliferation. In Arabidopsis thaliana (Mouse-ear cress), this protein is Peroxisomal nicotinamide adenine dinucleotide carrier (PXN).